An 875-amino-acid chain; its full sequence is Valine--tRNA ligase (875 aa).

The 'HIGH' region signature appears at 45–55; sequence PNVTGVLHMGH. The 'KMSKS' region motif lies at 524–528; the sequence is KMSKS. Lys527 lines the ATP pocket. Residues 803–837 are a coiled coil; it reads VKSLIDKTKELIRLEKQLEKYKMLNISVSKKLENE.

This sequence belongs to the class-I aminoacyl-tRNA synthetase family. ValS type 1 subfamily. In terms of assembly, monomer.

It localises to the cytoplasm. It catalyses the reaction tRNA(Val) + L-valine + ATP = L-valyl-tRNA(Val) + AMP + diphosphate. Functionally, catalyzes the attachment of valine to tRNA(Val). As ValRS can inadvertently accommodate and process structurally similar amino acids such as threonine, to avoid such errors, it has a 'posttransfer' editing activity that hydrolyzes mischarged Thr-tRNA(Val) in a tRNA-dependent manner. This Borreliella burgdorferi (strain ATCC 35210 / DSM 4680 / CIP 102532 / B31) (Borrelia burgdorferi) protein is Valine--tRNA ligase.